Consider the following 100-residue polypeptide: Small ribosomal subunit protein uS14c (100 aa).

This sequence belongs to the universal ribosomal protein uS14 family. As to quaternary structure, part of the 30S ribosomal subunit.

It localises to the plastid. It is found in the chloroplast. Functionally, binds 16S rRNA, required for the assembly of 30S particles. In Gracilaria tenuistipitata var. liui (Red alga), this protein is Small ribosomal subunit protein uS14c.